The sequence spans 508 residues: MARSVLSALSELRETRLEKAQALKELGNGPYALRFESSHRTANLQADHADLAKGEERLLSVSVAGRVMARRVMGKLAFYTLADETGTIQLYLDKATIDAAASNELASGTFVQLTTLVDAGDWIGVTGVLRRTDRGELSVKVQQWQILSKSLQPLPDKWHGLADVEKRYRQRYLDLIVSPQSRETFRRRALMVSAIRRWLDDRAFLEIETPVLQAEAGGAEARPFITHHNTLDLPLYLRIATELHLKRLVVGGFERVYELGRIFRNEGMSTRHNPEFTSVEVYQAYADYIDMMVLTEQLISSVCTQICGSTRITYQGIEIDLTPPWRRASMHELVQEATGLDFMGFADRAVAASAMARAGLEVPSKADSVGRLLNEAFEQAVEVSLIQPTFVLDYPIEISPLARQHRSKPGLVERFELFIVGRETANAFSELIDPLDQRQRLEAQQARRQAGDLEAHGVDEDFLQALEVGMPPTGGLGIGIDRLVMLFTDSPSIRDVIAFPLLRPELKT.

Mg(2+) contacts are provided by E416 and E423.

Belongs to the class-II aminoacyl-tRNA synthetase family. Homodimer. It depends on Mg(2+) as a cofactor.

It is found in the cytoplasm. It catalyses the reaction tRNA(Lys) + L-lysine + ATP = L-lysyl-tRNA(Lys) + AMP + diphosphate. The polypeptide is Lysine--tRNA ligase (Prochlorococcus marinus (strain MIT 9303)).